Reading from the N-terminus, the 200-residue chain is Imidazoleglycerol-phosphate dehydratase (200 aa).

It belongs to the imidazoleglycerol-phosphate dehydratase family.

The protein resides in the cytoplasm. The catalysed reaction is D-erythro-1-(imidazol-4-yl)glycerol 3-phosphate = 3-(imidazol-4-yl)-2-oxopropyl phosphate + H2O. Its pathway is amino-acid biosynthesis; L-histidine biosynthesis; L-histidine from 5-phospho-alpha-D-ribose 1-diphosphate: step 6/9. In Chlorobium phaeovibrioides (strain DSM 265 / 1930) (Prosthecochloris vibrioformis (strain DSM 265)), this protein is Imidazoleglycerol-phosphate dehydratase.